The chain runs to 396 residues: Flavohemoprotein (396 aa).

Positions 1–136 (MLDAQTIATV…LANVFIHREA (136 aa)) constitute a Globin domain. H85 lines the heme b pocket. Active-site charge relay system residues include Y95 and E135. Residues 147 to 396 (GGWEGTRPFR…YECFGPHKVL (250 aa)) are reductase. The region spanning 150 to 255 (EGTRPFRIVA…AAPAGDFFMN (106 aa)) is the FAD-binding FR-type domain. FAD contacts are provided by residues Y188 and 204-207 (RQYS). 268–273 (GVGQTP) serves as a coordination point for NADP(+). 389 to 392 (CFGP) contacts FAD.

Belongs to the globin family. Two-domain flavohemoproteins subfamily. This sequence in the C-terminal section; belongs to the flavoprotein pyridine nucleotide cytochrome reductase family. Requires heme b as cofactor. FAD serves as cofactor.

It carries out the reaction 2 nitric oxide + NADPH + 2 O2 = 2 nitrate + NADP(+) + H(+). It catalyses the reaction 2 nitric oxide + NADH + 2 O2 = 2 nitrate + NAD(+) + H(+). Is involved in NO detoxification in an aerobic process, termed nitric oxide dioxygenase (NOD) reaction that utilizes O(2) and NAD(P)H to convert NO to nitrate, which protects the bacterium from various noxious nitrogen compounds. Therefore, plays a central role in the inducible response to nitrosative stress. The chain is Flavohemoprotein from Salmonella typhi.